Here is a 422-residue protein sequence, read N- to C-terminus: Adenylosuccinate synthetase (422 aa).

GTP-binding positions include 11–17 (GDEGKGK) and 39–41 (GHT). Residue aspartate 12 is the Proton acceptor of the active site. Mg(2+)-binding residues include aspartate 12 and glycine 39. Residues 12 to 15 (DEGK), 37 to 40 (NAGH), threonine 129, arginine 143, asparagine 220, threonine 235, and arginine 299 contribute to the IMP site. Histidine 40 (proton donor) is an active-site residue. A substrate-binding site is contributed by 295–301 (VTTGRKR). Residues arginine 301, 327–329 (KLD), and 410–412 (GTG) each bind GTP.

This sequence belongs to the adenylosuccinate synthetase family. As to quaternary structure, homodimer. Mg(2+) is required as a cofactor.

It localises to the cytoplasm. The catalysed reaction is IMP + L-aspartate + GTP = N(6)-(1,2-dicarboxyethyl)-AMP + GDP + phosphate + 2 H(+). Its pathway is purine metabolism; AMP biosynthesis via de novo pathway; AMP from IMP: step 1/2. Its function is as follows. Plays an important role in the de novo pathway and in the salvage pathway of purine nucleotide biosynthesis. Catalyzes the first committed step in the biosynthesis of AMP from IMP. The protein is Adenylosuccinate synthetase of Arthroderma otae (strain ATCC MYA-4605 / CBS 113480) (Microsporum canis).